The chain runs to 360 residues: Leukotriene B4 receptor 2 (360 aa).

At 1-24 the chain is on the extracellular side; sequence MSVCYRPPGNETLLSWKGSRATGT. A glycan (N-linked (GlcNAc...) asparagine) is linked at Asn10. Residues 25–45 traverse the membrane as a helical segment; it reads AFLLLAALLGLPGNGFVVWSL. Topologically, residues 46–60 are cytoplasmic; it reads AGWRPTAGRPLAATL. The helical transmembrane segment at 61-81 threads the bilayer; the sequence is VLHLALADGAVLLLTPLFVAF. The Extracellular segment spans residues 82 to 96; it reads LSQEAWPLGQVGCKA. The helical transmembrane segment at 97–117 threads the bilayer; that stretch reads VYYVCALSMYASVLLTGLLSL. At 118–140 the chain is on the cytoplasmic side; that stretch reads QRCLAVTRPFLAPRLRSPALARR. The helical transmembrane segment at 141–161 threads the bilayer; the sequence is LLLGVWLAALVLAVPAAVYRH. Residues 162-185 lie on the Extracellular side of the membrane; that stretch reads LWGGRVCQLCHPSPVHAAAHLSLE. Residues 186–206 traverse the membrane as a helical segment; sequence TLTAFVLPFGTVLGCYGVTLA. Residues 207–224 lie on the Cytoplasmic side of the membrane; that stretch reads RLRGARWGSGRQGTRVGR. A helical membrane pass occupies residues 225 to 245; sequence LVSAIVLAFGLLWAPYHAVNL. Topologically, residues 246–275 are extracellular; sequence LQAVAALAPPEGPLARLGGAGQAARAGTTA. A helical transmembrane segment spans residues 276–296; the sequence is LAFFSSSVNPVLYVFTAGDLL. The Cytoplasmic portion of the chain corresponds to 297-360; sequence PRAGPRFLTR…GKTEKDSQEW (64 aa). Residues 311 to 360 are disordered; the sequence is SGEARGGSRSREGTMELRTTPKLKVMGQGRGNGDPGGGDGGKTEKDSQEW. A compositionally biased stretch (gly residues) spans 338-350; it reads QGRGNGDPGGGDG. The segment covering 351-360 has biased composition (basic and acidic residues); that stretch reads GKTEKDSQEW.

This sequence belongs to the G-protein coupled receptor 1 family.

The protein localises to the cell membrane. Functionally, low-affinity receptor for leukotrienes including leukotriene B4. Mediates chemotaxis of granulocytes and macrophages. The response is mediated via G-proteins that activate a phosphatidylinositol-calcium second messenger system. The chain is Leukotriene B4 receptor 2 (Ltb4r2) from Mus musculus (Mouse).